The chain runs to 195 residues: Probable DNA-directed RNA polymerase subunit delta (195 aa).

The HTH HARE-type domain maps to 14-83 (LSMIEVARAI…GDNKWGLRSW (70 aa)). Acidic residues-rich tracts occupy residues 120–138 (DSDA…DAYE) and 145–195 (YDDE…TSEE). The disordered stretch occupies residues 120–195 (DSDAIDYNAD…SDDDAETSEE (76 aa)).

It belongs to the RpoE family. RNAP is composed of a core of 2 alpha, a beta and a beta' subunits. The core is associated with a delta subunit and one of several sigma factors.

Its function is as follows. Participates in both the initiation and recycling phases of transcription. In the presence of the delta subunit, RNAP displays an increased specificity of transcription, a decreased affinity for nucleic acids, and an increased efficiency of RNA synthesis because of enhanced recycling. The protein is Probable DNA-directed RNA polymerase subunit delta of Streptococcus pneumoniae serotype 2 (strain D39 / NCTC 7466).